A 133-amino-acid polypeptide reads, in one-letter code: Large ribosomal subunit protein bL19 (133 aa).

It belongs to the bacterial ribosomal protein bL19 family.

In terms of biological role, this protein is located at the 30S-50S ribosomal subunit interface and may play a role in the structure and function of the aminoacyl-tRNA binding site. This chain is Large ribosomal subunit protein bL19, found in Stenotrophomonas maltophilia (strain K279a).